The sequence spans 571 residues: Proline--tRNA ligase (571 aa).

Belongs to the class-II aminoacyl-tRNA synthetase family. ProS type 1 subfamily. As to quaternary structure, homodimer.

The protein localises to the cytoplasm. It catalyses the reaction tRNA(Pro) + L-proline + ATP = L-prolyl-tRNA(Pro) + AMP + diphosphate. Functionally, catalyzes the attachment of proline to tRNA(Pro) in a two-step reaction: proline is first activated by ATP to form Pro-AMP and then transferred to the acceptor end of tRNA(Pro). As ProRS can inadvertently accommodate and process non-cognate amino acids such as alanine and cysteine, to avoid such errors it has two additional distinct editing activities against alanine. One activity is designated as 'pretransfer' editing and involves the tRNA(Pro)-independent hydrolysis of activated Ala-AMP. The other activity is designated 'posttransfer' editing and involves deacylation of mischarged Ala-tRNA(Pro). The misacylated Cys-tRNA(Pro) is not edited by ProRS. The polypeptide is Proline--tRNA ligase (Actinobacillus pleuropneumoniae serotype 3 (strain JL03)).